Here is a 217-residue protein sequence, read N- to C-terminus: THAP domain-containing protein 2 (217 aa).

A THAP-type zinc finger spans residues Met1 to Phe80. The HCFC1-binding motif (HBM) motif lies at Glu122–Tyr125.

This Mus musculus (Mouse) protein is THAP domain-containing protein 2 (Thap2).